The following is a 650-amino-acid chain: Chaperone protein DnaK (650 aa).

At threonine 200 the chain carries Phosphothreonine; by autocatalysis. The segment covering 611-634 (AQQAGAAGAAGAAAEGASAQGGAQ) has biased composition (low complexity). The tract at residues 611 to 650 (AQQAGAAGAAGAAAEGASAQGGAQPPDDVVDADFKEVKKD) is disordered.

It belongs to the heat shock protein 70 family.

Acts as a chaperone. This chain is Chaperone protein DnaK, found in Burkholderia pseudomallei (strain 1710b).